Here is a 125-residue protein sequence, read N- to C-terminus: Ribonuclease P protein component 1 (125 aa).

Positions 1-13 are enriched in basic and acidic residues; the sequence is MRRNGKEGKDRAP. The interval 1–24 is disordered; the sequence is MRRNGKEGKDRAPGRPQRKGQEVA.

The protein belongs to the eukaryotic/archaeal RNase P protein component 1 family. Consists of a catalytic RNA component and at least 4-5 protein subunits.

It localises to the cytoplasm. The catalysed reaction is Endonucleolytic cleavage of RNA, removing 5'-extranucleotides from tRNA precursor.. Part of ribonuclease P, a protein complex that generates mature tRNA molecules by cleaving their 5'-ends. This is Ribonuclease P protein component 1 from Thermococcus onnurineus (strain NA1).